The sequence spans 348 residues: Phosphate acyltransferase (348 aa).

The protein belongs to the PlsX family. As to quaternary structure, homodimer. Probably interacts with PlsY.

It is found in the cytoplasm. It catalyses the reaction a fatty acyl-[ACP] + phosphate = an acyl phosphate + holo-[ACP]. The protein operates within lipid metabolism; phospholipid metabolism. In terms of biological role, catalyzes the reversible formation of acyl-phosphate (acyl-PO(4)) from acyl-[acyl-carrier-protein] (acyl-ACP). This enzyme utilizes acyl-ACP as fatty acyl donor, but not acyl-CoA. This is Phosphate acyltransferase from Oenococcus oeni (strain ATCC BAA-331 / PSU-1).